Here is an 860-residue protein sequence, read N- to C-terminus: DNA mismatch repair protein MutS (860 aa).

607–614 (GPNMSGKS) is a binding site for ATP.

Belongs to the DNA mismatch repair MutS family.

This protein is involved in the repair of mismatches in DNA. It is possible that it carries out the mismatch recognition step. This protein has a weak ATPase activity. In Listeria innocua serovar 6a (strain ATCC BAA-680 / CLIP 11262), this protein is DNA mismatch repair protein MutS.